Here is a 197-residue protein sequence, read N- to C-terminus: Imidazoleglycerol-phosphate dehydratase (197 aa).

This sequence belongs to the imidazoleglycerol-phosphate dehydratase family.

It is found in the cytoplasm. It carries out the reaction D-erythro-1-(imidazol-4-yl)glycerol 3-phosphate = 3-(imidazol-4-yl)-2-oxopropyl phosphate + H2O. It functions in the pathway amino-acid biosynthesis; L-histidine biosynthesis; L-histidine from 5-phospho-alpha-D-ribose 1-diphosphate: step 6/9. The protein is Imidazoleglycerol-phosphate dehydratase of Pseudomonas entomophila (strain L48).